The primary structure comprises 245 residues: Octanoyltransferase (245 aa).

A BPL/LPL catalytic domain is found at 54 to 242 (QNAPEQVWLL…AFEQIFGPTI (189 aa)). Residues 93 to 100 (RGGEFTYH), 173 to 175 (AIG), and 186 to 188 (GVS) contribute to the substrate site. Cys-204 (acyl-thioester intermediate) is an active-site residue.

The protein belongs to the LipB family.

The protein localises to the cytoplasm. The catalysed reaction is octanoyl-[ACP] + L-lysyl-[protein] = N(6)-octanoyl-L-lysyl-[protein] + holo-[ACP] + H(+). It participates in protein modification; protein lipoylation via endogenous pathway; protein N(6)-(lipoyl)lysine from octanoyl-[acyl-carrier-protein]: step 1/2. Functionally, catalyzes the transfer of endogenously produced octanoic acid from octanoyl-acyl-carrier-protein onto the lipoyl domains of lipoate-dependent enzymes. Lipoyl-ACP can also act as a substrate although octanoyl-ACP is likely to be the physiological substrate. The protein is Octanoyltransferase of Bartonella quintana (strain Toulouse) (Rochalimaea quintana).